Here is a 245-residue protein sequence, read N- to C-terminus: Enolase-phosphatase E1 (245 aa).

It belongs to the HAD-like hydrolase superfamily. MasA/MtnC family. Monomer. Requires Mg(2+) as cofactor.

The catalysed reaction is 5-methylsulfanyl-2,3-dioxopentyl phosphate + H2O = 1,2-dihydroxy-5-(methylsulfanyl)pent-1-en-3-one + phosphate. The protein operates within amino-acid biosynthesis; L-methionine biosynthesis via salvage pathway; L-methionine from S-methyl-5-thio-alpha-D-ribose 1-phosphate: step 3/6. It participates in amino-acid biosynthesis; L-methionine biosynthesis via salvage pathway; L-methionine from S-methyl-5-thio-alpha-D-ribose 1-phosphate: step 4/6. In terms of biological role, bifunctional enzyme that catalyzes the enolization of 2,3-diketo-5-methylthiopentyl-1-phosphate (DK-MTP-1-P) into the intermediate 2-hydroxy-3-keto-5-methylthiopentenyl-1-phosphate (HK-MTPenyl-1-P), which is then dephosphorylated to form the acireductone 1,2-dihydroxy-3-keto-5-methylthiopentene (DHK-MTPene). The chain is Enolase-phosphatase E1 from Parasynechococcus marenigrum (strain WH8102).